A 464-amino-acid polypeptide reads, in one-letter code: Anthranilate synthase component 1 (464 aa).

L-tryptophan is bound by residues Ser-41 and Pro-236–Met-238. Gly-271–Thr-272 contributes to the chorismate binding site. Glu-298 contacts Mg(2+). Chorismate contacts are provided by residues Tyr-386, Arg-406, Gly-420–Gly-422, and Gly-422. Glu-435 is a binding site for Mg(2+).

Belongs to the anthranilate synthase component I family. As to quaternary structure, heterotetramer consisting of two non-identical subunits: a beta subunit (TrpG) and a large alpha subunit (TrpE). It depends on Mg(2+) as a cofactor.

The catalysed reaction is chorismate + L-glutamine = anthranilate + pyruvate + L-glutamate + H(+). It functions in the pathway amino-acid biosynthesis; L-tryptophan biosynthesis; L-tryptophan from chorismate: step 1/5. With respect to regulation, feedback inhibited by tryptophan. Its function is as follows. Part of a heterotetrameric complex that catalyzes the two-step biosynthesis of anthranilate, an intermediate in the biosynthesis of L-tryptophan. In the first step, the glutamine-binding beta subunit (TrpG) of anthranilate synthase (AS) provides the glutamine amidotransferase activity which generates ammonia as a substrate that, along with chorismate, is used in the second step, catalyzed by the large alpha subunit of AS (TrpE) to produce anthranilate. In the absence of TrpG, TrpE can synthesize anthranilate directly from chorismate and high concentrations of ammonia. The polypeptide is Anthranilate synthase component 1 (trpE) (Methanothermobacter thermautotrophicus (strain ATCC 29096 / DSM 1053 / JCM 10044 / NBRC 100330 / Delta H) (Methanobacterium thermoautotrophicum)).